A 313-amino-acid polypeptide reads, in one-letter code: Porphobilinogen deaminase (313 aa).

S-(dipyrrolylmethanemethyl)cysteine is present on Cys241.

This sequence belongs to the HMBS family. In terms of assembly, monomer. It depends on dipyrromethane as a cofactor.

It carries out the reaction 4 porphobilinogen + H2O = hydroxymethylbilane + 4 NH4(+). It participates in porphyrin-containing compound metabolism; protoporphyrin-IX biosynthesis; coproporphyrinogen-III from 5-aminolevulinate: step 2/4. In terms of biological role, tetrapolymerization of the monopyrrole PBG into the hydroxymethylbilane pre-uroporphyrinogen in several discrete steps. The chain is Porphobilinogen deaminase from Idiomarina loihiensis (strain ATCC BAA-735 / DSM 15497 / L2-TR).